The following is a 603-amino-acid chain: D-3-phosphoglycerate dehydrogenase 1, chloroplastic (603 aa).

The N-terminal 54 residues, 1 to 54 (MSATAAASSSIAVATNSLRNVTLSSRSPLPSAISVAFPSRGRNTLQRRLVLVSC), are a transit peptide targeting the chloroplast. Residues 210 to 211 (KV), aspartate 230, 289 to 291 (VAR), and aspartate 315 contribute to the NAD(+) site. Arginine 291 is an active-site residue. Residue glutamate 320 is part of the active site. Residue histidine 339 is the Proton donor of the active site. 339-342 (HLGA) provides a ligand contact to NAD(+). The 73-residue stretch at 531 to 603 (IILCRQVDQP…AVEEFVFLKL (73 aa)) folds into the ACT domain.

The protein belongs to the D-isomer specific 2-hydroxyacid dehydrogenase family. As to expression, ubiquitous, but highly expressed in roots. Expressed in vasculature, root and shoot meristems, distal part of cotyledons and leaves, anther, stigma and pollen grains. Detected at the tip of the cotyledons in late embryos.

The protein resides in the plastid. The protein localises to the chloroplast. The enzyme catalyses (2R)-3-phosphoglycerate + NAD(+) = 3-phosphooxypyruvate + NADH + H(+). The protein operates within amino-acid biosynthesis; L-serine biosynthesis; L-serine from 3-phospho-D-glycerate: step 1/3. With respect to regulation, partially inhibited by 5 mM serine. Involved in the plastidial phosphorylated pathway of serine biosynthesis (PPSB). Required for mature pollen development. The sequence is that of D-3-phosphoglycerate dehydrogenase 1, chloroplastic (PGDH1) from Arabidopsis thaliana (Mouse-ear cress).